A 106-amino-acid chain; its full sequence is Iron-sulfur cluster assembly protein CyaY (106 aa).

This sequence belongs to the frataxin family.

In terms of biological role, involved in iron-sulfur (Fe-S) cluster assembly. May act as a regulator of Fe-S biogenesis. The polypeptide is Iron-sulfur cluster assembly protein CyaY (Citrobacter koseri (strain ATCC BAA-895 / CDC 4225-83 / SGSC4696)).